We begin with the raw amino-acid sequence, 288 residues long: Bifunctional protein FolD (288 aa).

Residues 166–168 (GAS) and Ile-232 each bind NADP(+).

Belongs to the tetrahydrofolate dehydrogenase/cyclohydrolase family. Homodimer.

The enzyme catalyses (6R)-5,10-methylene-5,6,7,8-tetrahydrofolate + NADP(+) = (6R)-5,10-methenyltetrahydrofolate + NADPH. The catalysed reaction is (6R)-5,10-methenyltetrahydrofolate + H2O = (6R)-10-formyltetrahydrofolate + H(+). The protein operates within one-carbon metabolism; tetrahydrofolate interconversion. Catalyzes the oxidation of 5,10-methylenetetrahydrofolate to 5,10-methenyltetrahydrofolate and then the hydrolysis of 5,10-methenyltetrahydrofolate to 10-formyltetrahydrofolate. This Escherichia coli (strain SMS-3-5 / SECEC) protein is Bifunctional protein FolD.